Here is a 107-residue protein sequence, read N- to C-terminus: Large ribosomal subunit protein uL24 (107 aa).

This sequence belongs to the universal ribosomal protein uL24 family. As to quaternary structure, part of the 50S ribosomal subunit.

In terms of biological role, one of two assembly initiator proteins, it binds directly to the 5'-end of the 23S rRNA, where it nucleates assembly of the 50S subunit. One of the proteins that surrounds the polypeptide exit tunnel on the outside of the subunit. The chain is Large ribosomal subunit protein uL24 from Natranaerobius thermophilus (strain ATCC BAA-1301 / DSM 18059 / JW/NM-WN-LF).